Here is a 393-residue protein sequence, read N- to C-terminus: 4-hydroxyphenylpyruvate dioxygenase (393 aa).

Position 2 is an N-acetylthreonine (T2). VOC domains lie at 18–149 (HFHS…LVEK) and 180–338 (IIDH…IFTK). The residue at position 132 (K132) is an N6-succinyllysine. Fe cation is bound at residue H183. 3 positions are modified to phosphoserine: S211, S226, and S250. H266 and E349 together coordinate Fe cation.

This sequence belongs to the 4HPPD family. In terms of assembly, homodimer. The cofactor is Fe cation.

The protein resides in the cytoplasm. The protein localises to the endoplasmic reticulum membrane. Its subcellular location is the golgi apparatus membrane. It carries out the reaction 3-(4-hydroxyphenyl)pyruvate + O2 = homogentisate + CO2. It participates in amino-acid degradation; L-phenylalanine degradation; acetoacetate and fumarate from L-phenylalanine: step 3/6. Catalyzes the conversion of 4-hydroxyphenylpyruvic acid to homogentisic acid, one of the steps in tyrosine catabolism. In Rattus norvegicus (Rat), this protein is 4-hydroxyphenylpyruvate dioxygenase (Hpd).